The chain runs to 318 residues: Protoheme IX farnesyltransferase (318 aa).

9 helical membrane passes run 33–53 (VMSL…VSVH), 54–74 (PFIG…SGAL), 102–122 (GEAL…LALA), 125–145 (VLAG…YTMW), 154–174 (IVIG…AATG), 181–201 (WLMF…LALF), 225–245 (VHIL…AFSN), 246–266 (IGGP…LLGA), and 288–308 (FFKL…AEAL).

The protein belongs to the UbiA prenyltransferase family. Protoheme IX farnesyltransferase subfamily. As to quaternary structure, interacts with CtaA.

It is found in the cell inner membrane. The catalysed reaction is heme b + (2E,6E)-farnesyl diphosphate + H2O = Fe(II)-heme o + diphosphate. It functions in the pathway porphyrin-containing compound metabolism; heme O biosynthesis; heme O from protoheme: step 1/1. Converts heme B (protoheme IX) to heme O by substitution of the vinyl group on carbon 2 of heme B porphyrin ring with a hydroxyethyl farnesyl side group. The sequence is that of Protoheme IX farnesyltransferase from Ruegeria pomeroyi (strain ATCC 700808 / DSM 15171 / DSS-3) (Silicibacter pomeroyi).